The chain runs to 166 residues: Mitochondrial translation release factor in rescue (166 aa).

A mitochondrion-targeting transit peptide spans 1-35 (MSTVGLFHFPTPLTRICPAPWGLRLWEKLTLLSPG). Residues 57–121 (ENELEEQFVK…LQEKVDVFYN (65 aa)) form a GGQ domain region. The GGQ motif lies at 71–73 (GGQ). An N5-methylglutamine modification is found at Gln-73. Residues 122-148 (GENSPVHKEKREAAKKKQERKKRAKET) are disordered. Residues 126–137 (PVHKEKREAAKK) show a composition bias toward basic and acidic residues. Residues 127–160 (VHKEKREAAKKKQERKKRAKETLEKKKLLKELWE) adopt a coiled-coil conformation.

Belongs to the prokaryotic/mitochondrial release factor family. In terms of assembly, interacts (via C-terminus) with MTRES1 (via S4 domain). Associates with mitoribosomal S39 large subunit, peptidyl tRNA and nascent chain. In terms of processing, methylation of glutamine in the GGQ triplet by HEMK1. In terms of tissue distribution, expressed in all areas of the brain tested.

The protein localises to the mitochondrion. In terms of biological role, part of a mitoribosome-associated quality control pathway that prevents aberrant translation by responding to interruptions during elongation. As heterodimer with MTRES1, ejects the unfinished nascent chain and peptidyl transfer RNA (tRNA), respectively, from stalled ribosomes. Recruitment of mitoribosome biogenesis factors to these quality control intermediates suggests additional roles for MTRES1 and MTRF during mitoribosome rescue. In Homo sapiens (Human), this protein is Mitochondrial translation release factor in rescue.